A 260-amino-acid chain; its full sequence is Phosphate import ATP-binding protein PstB 2 (260 aa).

One can recognise an ABC transporter domain in the interval 9–255 (IKVKDLSFYY…PLDSRTRDYV (247 aa)). An ATP-binding site is contributed by 41-48 (GPSGCGKS).

This sequence belongs to the ABC transporter superfamily. Phosphate importer (TC 3.A.1.7) family. The complex is composed of two ATP-binding proteins (PstB), two transmembrane proteins (PstC and PstA) and a solute-binding protein (PstS).

It is found in the cell inner membrane. It carries out the reaction phosphate(out) + ATP + H2O = ADP + 2 phosphate(in) + H(+). In terms of biological role, part of the ABC transporter complex PstSACB involved in phosphate import. Responsible for energy coupling to the transport system. The chain is Phosphate import ATP-binding protein PstB 2 from Nostoc sp. (strain PCC 7120 / SAG 25.82 / UTEX 2576).